The following is a 495-amino-acid chain: UDP-glycosyltransferase 73C25 (495 aa).

23–26 serves as a coordination point for UDP-alpha-D-glucose; sequence GHMI. The active-site Proton acceptor is His-24. Asp-129 (charge relay) is an active-site residue. UDP-alpha-D-glucose is bound by residues 355-358, 373-381, and 397-398; these read WSPQ, HCGWNSTLE, and DQ.

The protein belongs to the UDP-glycosyltransferase family.

Functionally, catalyzes the transfer of a glucose (Glc) moiety from UDP-Glc to the C-28 carboxylic group of oleanolate 3-O-beta-D-glucoside to form oleanolate 3,28-O-beta-D-diglucoside. The polypeptide is UDP-glycosyltransferase 73C25 (Barbarea vulgaris (Yellow rocket)).